A 504-amino-acid polypeptide reads, in one-letter code: Maturase K (504 aa).

It belongs to the intron maturase 2 family. MatK subfamily.

It is found in the plastid. It localises to the chloroplast. Functionally, usually encoded in the trnK tRNA gene intron. Probably assists in splicing its own and other chloroplast group II introns. The protein is Maturase K of Arabidopsis lyrata (Lyre-leaved rock-cress).